A 265-amino-acid chain; its full sequence is Phosphonates import ATP-binding protein PhnC (265 aa).

The region spanning leucine 3 to glutamine 247 is the ABC transporter domain. Glycine 36–serine 43 is a binding site for ATP.

It belongs to the ABC transporter superfamily. Phosphonates importer (TC 3.A.1.9.1) family. The complex is composed of two ATP-binding proteins (PhnC), two transmembrane proteins (PhnE) and a solute-binding protein (PhnD).

The protein resides in the cell inner membrane. It catalyses the reaction phosphonate(out) + ATP + H2O = phosphonate(in) + ADP + phosphate + H(+). Part of the ABC transporter complex PhnCDE involved in phosphonates import. Responsible for energy coupling to the transport system. This Pseudomonas fluorescens (strain Pf0-1) protein is Phosphonates import ATP-binding protein PhnC.